The primary structure comprises 653 residues: Dual specificity protein kinase shkB (653 aa).

The interval Asn112–Ser133 is disordered. The region spanning Tyr174–Leu432 is the Protein kinase domain. Residues Leu180–Val188 and Lys201 each bind ATP. The Proton acceptor role is filled by Asp298. The SH2 domain occupies Gly534–Phe625.

This sequence belongs to the protein kinase superfamily. TKL Ser/Thr protein kinase family. SH2 domain-containing protein kinase subfamily.

It is found in the membrane. It catalyses the reaction L-seryl-[protein] + ATP = O-phospho-L-seryl-[protein] + ADP + H(+). It carries out the reaction L-threonyl-[protein] + ATP = O-phospho-L-threonyl-[protein] + ADP + H(+). In terms of biological role, required for proper chemotaxis and phagocytosis; proper spatiotemporal control of F-actin levels in chemotaxing cells. Negative regulator of the PI3K (phosphatidylinositol 3 kinase) pathway. Predominantly phosphorylates serines and threonines and tyrosines at a lower level. This Dictyostelium discoideum (Social amoeba) protein is Dual specificity protein kinase shkB (shkB).